A 574-amino-acid polypeptide reads, in one-letter code: Proline--tRNA ligase (574 aa).

Belongs to the class-II aminoacyl-tRNA synthetase family. ProS type 1 subfamily. Homodimer.

The protein localises to the cytoplasm. It catalyses the reaction tRNA(Pro) + L-proline + ATP = L-prolyl-tRNA(Pro) + AMP + diphosphate. In terms of biological role, catalyzes the attachment of proline to tRNA(Pro) in a two-step reaction: proline is first activated by ATP to form Pro-AMP and then transferred to the acceptor end of tRNA(Pro). As ProRS can inadvertently accommodate and process non-cognate amino acids such as alanine and cysteine, to avoid such errors it has two additional distinct editing activities against alanine. One activity is designated as 'pretransfer' editing and involves the tRNA(Pro)-independent hydrolysis of activated Ala-AMP. The other activity is designated 'posttransfer' editing and involves deacylation of mischarged Ala-tRNA(Pro). The misacylated Cys-tRNA(Pro) is not edited by ProRS. This is Proline--tRNA ligase from Anaeromyxobacter sp. (strain K).